The following is a 280-amino-acid chain: Mesaconyl-C(4)-CoA hydratase (280 aa).

This sequence belongs to the HTD2 family. In terms of assembly, homodimer.

The catalysed reaction is (3S)-citramalyl-CoA = 3-methylfumaryl-CoA + H2O. With respect to regulation, inhibited by 3-methylfumaryl-CoA concentrations above 0.3 mM. In terms of biological role, involved in the glyoxylate assimilation cycle used to regenerate acetyl-CoA and produce pyruvate as universal precursor for biosynthesis. Catalyzes the hydration of 3-methylfumaryl-CoA (mesaconyl-C4-CoA) to (3S)-citramalyl-CoA. This is Mesaconyl-C(4)-CoA hydratase (meh) from Chloroflexus aurantiacus (strain ATCC 29366 / DSM 635 / J-10-fl).